Here is a 416-residue protein sequence, read N- to C-terminus: UPF0761 membrane protein Rfer_2991 (416 aa).

6 helical membrane passes run 60-80 (MALV…PMFA), 117-137 (LGGA…LTID), 156-176 (VLVY…SLSI), 187-207 (VVGV…FFMV), 222-242 (WVKW…LELA), and 268-288 (ILLI…VIAA).

This sequence belongs to the UPF0761 family.

The protein resides in the cell inner membrane. This chain is UPF0761 membrane protein Rfer_2991, found in Albidiferax ferrireducens (strain ATCC BAA-621 / DSM 15236 / T118) (Rhodoferax ferrireducens).